The sequence spans 467 residues: Cytochrome c-552 (467 aa).

Residues 1–27 (MMKKMTGKSFALSALVAASFMAAGAMA) form the signal peptide. Position 87 (His-87) interacts with heme c. 3 residues coordinate heme: Cys-115, Cys-118, and Lys-119. Residues Cys-153, Cys-156, His-157, Cys-195, Cys-198, and His-199 each coordinate heme c. Glu-201, Tyr-202, Lys-250, and Gln-252 together coordinate Ca(2+). Tyr-202 provides a ligand contact to substrate. Residue His-253 coordinates substrate. Heme c contacts are provided by His-264, Cys-271, Cys-274, His-275, His-290, Cys-303, Cys-306, His-307, and His-382.

It belongs to the cytochrome c-552 family. Ca(2+) serves as cofactor. The cofactor is heme c.

Its subcellular location is the periplasm. The enzyme catalyses 6 Fe(III)-[cytochrome c] + NH4(+) + 2 H2O = 6 Fe(II)-[cytochrome c] + nitrite + 8 H(+). The protein operates within nitrogen metabolism; nitrate reduction (assimilation). Its function is as follows. Catalyzes the reduction of nitrite to ammonia, consuming six electrons in the process. This Shewanella sp. (strain W3-18-1) protein is Cytochrome c-552.